The primary structure comprises 707 residues: Protein SGM1 (707 aa).

Basic and acidic residues predominate over residues 1–11 (MSKKLSLEERL). The disordered stretch occupies residues 1–52 (MSKKLSLEERLSLATKKGRKKNKRSTSNLSSPSPVVLSNNEQESARTSIDDA). An N-acetylserine modification is found at S2. Positions 27–40 (SNLSSPSPVVLSNN) are enriched in low complexity. The stretch at 122–473 (VEELVKEISP…KPHQENSNEK (352 aa)) forms a coiled coil. Residues S151, S538, S549, S568, S571, S576, and S589 each carry the phosphoserine modification. Residues 594 to 706 (SAHLVNKLST…QQMVEMQGKM (113 aa)) adopt a coiled-coil conformation.

It belongs to the SGM1 family. As to quaternary structure, interacts with YPT6.

It localises to the golgi apparatus. Functionally, required for normal growth rate on galactose and mannose. This chain is Protein SGM1 (SGM1), found in Saccharomyces cerevisiae (strain ATCC 204508 / S288c) (Baker's yeast).